The chain runs to 163 residues: NADH-quinone oxidoreductase subunit I (163 aa).

2 4Fe-4S ferredoxin-type domains span residues 53 to 83 (LRRYPNGEERCIACKLCEAICPAQAITIEAG) and 94 to 123 (VRYDIDMVKCIYCGFCQEACPVDAIVEGPN). Positions 63, 66, 69, 73, 103, 106, 109, and 113 each coordinate [4Fe-4S] cluster.

It belongs to the complex I 23 kDa subunit family. As to quaternary structure, NDH-1 is composed of 14 different subunits. Subunits NuoA, H, J, K, L, M, N constitute the membrane sector of the complex. Requires [4Fe-4S] cluster as cofactor.

Its subcellular location is the cell inner membrane. The catalysed reaction is a quinone + NADH + 5 H(+)(in) = a quinol + NAD(+) + 4 H(+)(out). NDH-1 shuttles electrons from NADH, via FMN and iron-sulfur (Fe-S) centers, to quinones in the respiratory chain. The immediate electron acceptor for the enzyme in this species is believed to be ubiquinone. Couples the redox reaction to proton translocation (for every two electrons transferred, four hydrogen ions are translocated across the cytoplasmic membrane), and thus conserves the redox energy in a proton gradient. The polypeptide is NADH-quinone oxidoreductase subunit I (Brucella melitensis biotype 1 (strain ATCC 23456 / CCUG 17765 / NCTC 10094 / 16M)).